The following is a 263-amino-acid chain: uncharacterized protein (263 aa).

31-38 (GPTGSGKT) contributes to the ATP binding site.

It belongs to the CbbQ/NirQ/NorQ/GpvN family.

This is an uncharacterized protein from Staphylococcus epidermidis (strain ATCC 35984 / DSM 28319 / BCRC 17069 / CCUG 31568 / BM 3577 / RP62A).